Reading from the N-terminus, the 843-residue chain is INO80 complex subunit D-B (843 aa).

Residues 159–175 (TLNHKQKQQDHSVDTNH) are compositionally biased toward basic and acidic residues. Disordered regions lie at residues 159-216 (TLNH…PTVR), 221-240 (FKTS…STDN), 503-550 (YHHH…LPQG), 695-726 (SLLH…HLTD), and 791-843 (LSTP…TAAP). Composition is skewed to polar residues over residues 176–187 (LRTSSLPSTLSH), 197–216 (RATQ…PTVR), and 221–231 (FKTSSSLQDTH). Residues 503–540 (YHHHQQIQRHRPLKKAKPPALSKKHKKKGKRGTQRRPQ) are compositionally biased toward basic residues. The span at 705–717 (PPSPPSPQPPLTP) shows a compositional bias: pro residues. A compositionally biased stretch (low complexity) spans 796 to 821 (QPSSALSALPQSSQTRSTTTSPTSQT).

This sequence belongs to the INO80D family. As to quaternary structure, component of the chromatin-remodeling INO80 complex.

The protein resides in the nucleus. Functionally, putative regulatory component of the chromatin remodeling INO80 complex which is involved in transcriptional regulation, DNA replication and probably DNA repair. This is INO80 complex subunit D-B (ino80db) from Danio rerio (Zebrafish).